Consider the following 909-residue polypeptide: UPF0182 protein H16_A1615 (909 aa).

Helical transmembrane passes span 16-36 (TWVV…GLVV), 58-78 (ALLF…SGWL), 114-134 (VAVL…AIAL), 169-189 (WLLL…GLRG), 205-225 (ATHG…SYWL), 246-266 (VHVG…AAAA), and 281-301 (AAAL…PALF).

Belongs to the UPF0182 family.

It is found in the cell membrane. The polypeptide is UPF0182 protein H16_A1615 (Cupriavidus necator (strain ATCC 17699 / DSM 428 / KCTC 22496 / NCIMB 10442 / H16 / Stanier 337) (Ralstonia eutropha)).